The chain runs to 216 residues: Thiopurine S-methyltransferase (216 aa).

Residues Trp10, Leu45, Glu66, and Arg123 each coordinate S-adenosyl-L-methionine.

This sequence belongs to the class I-like SAM-binding methyltransferase superfamily. TPMT family.

Its subcellular location is the cytoplasm. It carries out the reaction S-adenosyl-L-methionine + a thiopurine = S-adenosyl-L-homocysteine + a thiopurine S-methylether.. This is Thiopurine S-methyltransferase from Pseudomonas putida (strain GB-1).